The following is a 161-amino-acid chain: MPSFDVVSELDKHEVTNAVENAVKELDRRYDLKGKGSFEFKDKELTVNLTAEAEFQLEAMIEILKLALVKRKIDVQCLEVKDAYASGKVMKQEAVLKEGIDKELAKKIVAHIKDAKLKVQAAIQGEQVRVTGKKRDDLQEAIAALRAKEFGMPLQFNNFRD.

This sequence belongs to the YajQ family.

Its function is as follows. Nucleotide-binding protein. The sequence is that of Nucleotide-binding protein PFL_4775 from Pseudomonas fluorescens (strain ATCC BAA-477 / NRRL B-23932 / Pf-5).